A 436-amino-acid chain; its full sequence is Probable G-protein coupled receptor C06G4.5 (436 aa).

Over 1–53 (MSTNLVDYVDDSYLNQSMNSENGLDSVTQIMYDMKKYNIVNDVLPPPNHEDLH) the chain is Extracellular. An N-linked (GlcNAc...) asparagine glycan is attached at Asn-15. The helical transmembrane segment at 54–74 (VVIMAVSYLLLFLLGTCGNVA) threads the bilayer. At 75–94 (VLTTIYHVIRSSRATLDNTL) the chain is on the cytoplasmic side. The helical transmembrane segment at 95–115 (IYVIVLSCVDFGVCLSLPITV) threads the bilayer. Residues 116–132 (IDQILGFWMFGKIPCKL) are Extracellular-facing. A helical membrane pass occupies residues 133–153 (HAVFENFGKILSALILTAMSF). At 154-171 (DRYAGVCHPQRKRLRSRN) the chain is on the cytoplasmic side. A helical membrane pass occupies residues 172-192 (FAITILLVLAVYAFITLCPLL). Residues 193–230 (WSFTAREIILYAKETAPGMLTRMKIEKCTVDIDSQMFT) lie on the Extracellular side of the membrane. The helical transmembrane segment at 231–251 (AFTIYQFILCYCTPLVLIAFF) threads the bilayer. Residues 252–281 (YTKLLSKLREHTRTFKSSQIPFLHISLYTL) are Cytoplasmic-facing. A helical membrane pass occupies residues 282 to 302 (AVACFYFLCWTPFWMATLFAV). The Extracellular segment spans residues 303–316 (YLENSANSSSVPPV). An N-linked (GlcNAc...) asparagine glycan is attached at Asn-309. The helical transmembrane segment at 317–337 (FVYIMYFIHALPFTNSAINWI) threads the bilayer. Residues 338-436 (LYGALNGQLQ…LLSNHNPTFL (99 aa)) lie on the Cytoplasmic side of the membrane.

Belongs to the G-protein coupled receptor 1 family.

The protein localises to the cell membrane. Putative receptor. The chain is Probable G-protein coupled receptor C06G4.5 from Caenorhabditis elegans.